Reading from the N-terminus, the 185-residue chain is Peptidyl-tRNA hydrolase (185 aa).

TRNA is bound at residue Tyr-14. His-19 serves as the catalytic Proton acceptor. 3 residues coordinate tRNA: Tyr-65, Asn-67, and Asn-113.

This sequence belongs to the PTH family. As to quaternary structure, monomer.

It is found in the cytoplasm. The catalysed reaction is an N-acyl-L-alpha-aminoacyl-tRNA + H2O = an N-acyl-L-amino acid + a tRNA + H(+). Hydrolyzes ribosome-free peptidyl-tRNAs (with 1 or more amino acids incorporated), which drop off the ribosome during protein synthesis, or as a result of ribosome stalling. In terms of biological role, catalyzes the release of premature peptidyl moieties from peptidyl-tRNA molecules trapped in stalled 50S ribosomal subunits, and thus maintains levels of free tRNAs and 50S ribosomes. The protein is Peptidyl-tRNA hydrolase of Rickettsia typhi (strain ATCC VR-144 / Wilmington).